Here is a 235-residue protein sequence, read N- to C-terminus: Small ribosomal subunit protein uS2 (235 aa).

This sequence belongs to the universal ribosomal protein uS2 family.

The chain is Small ribosomal subunit protein uS2 from Anoxybacillus flavithermus (strain DSM 21510 / WK1).